We begin with the raw amino-acid sequence, 254 residues long: Alcohol dehydrogenase 2 (254 aa).

10–33 contacts NAD(+); the sequence is FVAGLGGIGLDTSREIVKSGPKNL. S138 serves as a coordination point for substrate. Y151 functions as the Proton acceptor in the catalytic mechanism.

Belongs to the short-chain dehydrogenases/reductases (SDR) family. Homodimer.

It catalyses the reaction a primary alcohol + NAD(+) = an aldehyde + NADH + H(+). The catalysed reaction is a secondary alcohol + NAD(+) = a ketone + NADH + H(+). This chain is Alcohol dehydrogenase 2 (Adh2), found in Drosophila hydei (Fruit fly).